An 82-amino-acid polypeptide reads, in one-letter code: MKTAISLPDETFDRVSRRASELGMSRSEFFTKAAQRYLHELDAQLLTGQIDRALESIHGTDEAEALAVANAYRVLETMDDEW.

Probably forms a complex with cognate toxin MazF2.

Antitoxin component of a type II toxin-antitoxin (TA) system. Labile antitoxin that binds to cognate MazF2 toxin and counteracts its endoribonuclease activity. This is Antitoxin MazE2 (mazE2) from Mycobacterium bovis (strain ATCC BAA-935 / AF2122/97).